We begin with the raw amino-acid sequence, 406 residues long: Prisilkin-39 (406 aa).

The first 19 residues, 1–19, serve as a signal peptide directing secretion; the sequence is MKGFLTLLLVCAILSTGYC. 2 consecutive transmembrane segments (helical) span residues 26-48 and 58-80; these read ALTG…GAGA and VGVG…YGGY. The tract at residues 78 to 197 is 10 X 12 AA tandem repeat of G-G-Y-[SG]-G-Y-[GS]-Y-G-Y-P-[AT]; the sequence is GGYSGYGYGY…YSGYSYGYPT (120 aa).

As to expression, expression is confined to the prism and organic layers of the shell with no expression detected in the nacreous shell layer. Also expressed in the mantle edge, extrapallial fluid, hemolymph and, to a lesser extent, in the viscus (at protein level). In the mantle, localizes to inner epithelial cells of the outer fold and the outer epithelial cells of the middle fold at the bottom of the periostracal groove.

The protein resides in the membrane. Functionally, binds chitin and may serve as a framework constituent participating in shell formation. Inhibits aragonite precipitation and may regulate aragonite growth during shell layer formation. Does not affect calcite crystallization. The sequence is that of Prisilkin-39 from Pinctada fucata (Akoya pearl oyster).